The sequence spans 292 residues: 2-(5''-triphosphoribosyl)-3'-dephosphocoenzyme-A synthase (292 aa).

Belongs to the CitG/MdcB family.

It catalyses the reaction 3'-dephospho-CoA + ATP = 2'-(5''-triphospho-alpha-D-ribosyl)-3'-dephospho-CoA + adenine. Its function is as follows. Catalyzes the formation of 2-(5''-triphosphoribosyl)-3'-dephosphocoenzyme-A, the precursor of the prosthetic group of the holo-acyl carrier protein (gamma chain) of citrate lyase, from ATP and dephospho-CoA. This is 2-(5''-triphosphoribosyl)-3'-dephosphocoenzyme-A synthase from Escherichia coli O6:K15:H31 (strain 536 / UPEC).